A 278-amino-acid polypeptide reads, in one-letter code: N-terminal Xaa-Pro-Lys N-methyltransferase 2 (278 aa).

Residues G123, R128, D145, 174–175 (LQ), Q190, and H195 contribute to the S-adenosyl-L-methionine site.

Belongs to the methyltransferase superfamily. NTM1 family.

It is found in the nucleus. It carries out the reaction N-terminal L-alanyl-L-prolyl-L-lysyl-[protein] + S-adenosyl-L-methionine = N-terminal N-methyl-L-alanyl-L-prolyl-L-lysyl-[protein] + S-adenosyl-L-homocysteine + H(+). It catalyses the reaction N-terminal L-prolyl-L-prolyl-L-lysyl-[protein] + S-adenosyl-L-methionine = N-terminal N-methyl-L-prolyl-L-prolyl-L-lysyl-[protein] + S-adenosyl-L-homocysteine + H(+). The enzyme catalyses N-terminal L-seryl-L-prolyl-L-lysyl-[protein] + S-adenosyl-L-methionine = N-terminal N-methyl-L-seryl-L-prolyl-L-lysyl-[protein] + S-adenosyl-L-homocysteine + H(+). Its function is as follows. Alpha N-methyltransferase that methylates the N-terminus of target proteins containing the N-terminal motif [Ala/Pro/Ser]-Pro-Lys when the initiator Met is cleaved. Specifically catalyzes monomethylation of exposed alpha-amino group of Ala or Ser residue in the [Ala/Ser]-Pro-Lys motif and Pro in the Pro-Pro-Lys motif. Predominantly functions as a mono-methyltransferase but is also able to di-/tri-methylate the GPKRIA peptide and di-methylate the PPKRIA peptide (in vitro). May activate NTMT1 by priming its substrates for trimethylation. The protein is N-terminal Xaa-Pro-Lys N-methyltransferase 2 (ntmt2) of Danio rerio (Zebrafish).